Reading from the N-terminus, the 90-residue chain is Small ribosomal subunit protein bS16 (90 aa).

The protein belongs to the bacterial ribosomal protein bS16 family.

This Streptococcus pneumoniae serotype 19F (strain G54) protein is Small ribosomal subunit protein bS16.